A 328-amino-acid polypeptide reads, in one-letter code: Gonadotropin-releasing hormone receptor (328 aa).

At 1–38 the chain is on the extracellular side; the sequence is MANSDSPEQNENHCSSINSSIPLTPGSLPTLTLSGKIR. The N-linked (GlcNAc...) asparagine glycan is linked to Asn18. Residues 39-58 form a helical membrane-spanning segment; it reads VTVTFFLFLLSTIFNTSFLL. The Cytoplasmic segment spans residues 59 to 77; sequence KLQNWTQRKEKRKKLSRMK. The chain crosses the membrane as a helical span at residues 78 to 97; it reads LLLKHLTLANLLETLIVMPL. Residues 98 to 115 are Extracellular-facing; that stretch reads DGMWNITVQWYAGELLCK. Asn102 carries an N-linked (GlcNAc...) asparagine glycan. An intrachain disulfide couples Cys114 to Cys196. Residues 116-137 traverse the membrane as a helical segment; sequence VLSYLKLFSMYAPAFMMVVISL. At 138 to 164 the chain is on the cytoplasmic side; that stretch reads DRSLAITKPLAVKSNSKLGQFMIGLAW. Residues 165-184 traverse the membrane as a helical segment; that stretch reads LLSSIFAGPQLYIFGMIHLA. The Extracellular segment spans residues 185–212; sequence DDSGQTEGFSQCVTHCSFPQWWHQAFYN. The helical transmembrane segment at 213–232 threads the bilayer; it reads FFTFSCLFIIPLLIMVICNA. The Cytoplasmic segment spans residues 233–281; it reads KIIFTLTRVLHQDPHKLQLNQSKNNIPRARLRTLKMTVAFATSFTVCWT. A helical membrane pass occupies residues 282-300; it reads PYYVLGIWYWFDPDMVNRV. The Extracellular portion of the chain corresponds to 301–306; sequence SDPVNH. The helical transmembrane segment at 307 to 326 threads the bilayer; sequence FFFLFAFLNPCFNPLIYGYF. Over 327–328 the chain is Cytoplasmic; that stretch reads SL.

The protein belongs to the G-protein coupled receptor 1 family.

Its subcellular location is the cell membrane. Functionally, receptor for gonadotropin releasing hormone (GnRH) that mediates the action of GnRH to stimulate the secretion of the gonadotropic hormones luteinizing hormone (LH) and follicle-stimulating hormone (FSH). This receptor mediates its action by association with G-proteins that activate a phosphatidylinositol-calcium second messenger system. The protein is Gonadotropin-releasing hormone receptor (GNRHR) of Bos mutus grunniens (Wild yak).